A 239-amino-acid chain; its full sequence is 2,3,4,5-tetrahydropyridine-2,6-dicarboxylate N-acetyltransferase (239 aa).

Belongs to the transferase hexapeptide repeat family. DapH subfamily.

The catalysed reaction is (S)-2,3,4,5-tetrahydrodipicolinate + acetyl-CoA + H2O = L-2-acetamido-6-oxoheptanedioate + CoA. Its pathway is amino-acid biosynthesis; L-lysine biosynthesis via DAP pathway; LL-2,6-diaminopimelate from (S)-tetrahydrodipicolinate (acetylase route): step 1/3. Functionally, catalyzes the transfer of an acetyl group from acetyl-CoA to tetrahydrodipicolinate. The sequence is that of 2,3,4,5-tetrahydropyridine-2,6-dicarboxylate N-acetyltransferase from Staphylococcus aureus (strain Newman).